The primary structure comprises 1029 residues: Endosome/lysosome-associated apoptosis and autophagy regulator family member 2 (1029 aa).

Residues 1–47 form the signal peptide; it reads MLFRARGPVRGRGWGRPAEAPRRGRSPPWSPAWICCWALAGCQAAWA. The Extracellular segment spans residues 48-929; that stretch reads GDLPSSSSRP…TCETVDFWLK (882 aa). N-linked (GlcNAc...) asparagine glycosylation is present at Asn169. Cystine bridges form between Cys293–Cys310, Cys323–Cys346, and Cys326–Cys358. N-linked (GlcNAc...) asparagine glycans are attached at residues Asn405 and Asn691. Positions 672-877 constitute an MRH domain; that stretch reads SDCFFYHEKE…LWESAEACPL (206 aa). Disulfide bonds link Cys674/Cys720, Cys730/Cys758, Cys827/Cys863, and Cys839/Cys875. Residues 930-950 form a helical membrane-spanning segment; sequence VGAGVGAFTAVLLVALTCYFW. Residues 951–1029 lie on the Cytoplasmic side of the membrane; that stretch reads KKNQKLEYKY…QLKTSRSPNI (79 aa). Residue Ser1018 is modified to Phosphoserine.

The protein belongs to the ELAPOR family.

Its subcellular location is the cell membrane. Its function is as follows. Functions as a regulator of the BMP signaling pathway and may be involved in epidermal differentiation. This chain is Endosome/lysosome-associated apoptosis and autophagy regulator family member 2, found in Homo sapiens (Human).